The chain runs to 706 residues: Polyribonucleotide nucleotidyltransferase (706 aa).

Mg(2+)-binding residues include D490 and D496. The KH domain occupies 556 to 615; sequence PRIETMQIPTDKIREVIGSGGKVIREIVEVSGAKVDINDEGIIKIASPNGDSIQKAYDMI. In terms of domain architecture, S1 motif spans 625–693; sequence GKIYKGKVVK…DRGKVRLAMK (69 aa).

The protein belongs to the polyribonucleotide nucleotidyltransferase family. It depends on Mg(2+) as a cofactor.

It is found in the cytoplasm. The catalysed reaction is RNA(n+1) + phosphate = RNA(n) + a ribonucleoside 5'-diphosphate. Involved in mRNA degradation. Catalyzes the phosphorolysis of single-stranded polyribonucleotides processively in the 3'- to 5'-direction. The chain is Polyribonucleotide nucleotidyltransferase from Jannaschia sp. (strain CCS1).